Reading from the N-terminus, the 200-residue chain is Systemin (200 aa).

The segment at 1–33 (MGTPSYDIKNKGDDMQEEPKVKLHHEKGGDEKE) is disordered. Propeptides lie at residues 1–178 (MGTP…REDL) and 197–200 (NNKL). One copy of the 1; truncated repeat lies at 3-8 (TPSYDI). Basic and acidic residues predominate over residues 8–33 (IKNKGDDMQEEPKVKLHHEKGGDEKE). Repeat copies occupy residues 37 to 45 (EKETPSQDI), 80 to 88 (EKETISQYI), 117 to 125 (EKETPSQDI), and 145 to 153 (DKETPSQDI). Disordered regions lie at residues 106–159 (EEEE…MEGE) and 178–200 (LAVQ…NNKL). Composition is skewed to basic and acidic residues over residues 111–140 (EKEK…KVEH) and 146–158 (KETP…KMEG).

In terms of tissue distribution, all organs except the roots. Transported out of wounds to distal tissues.

The protein localises to the cytoplasm. Its function is as follows. Activates a lipid-based signal transduction pathway in which linolenic acid is converted to jasmonic acid, a potent activator of defense gene transcription, including proteinase inhibitor. The protein is Systemin of Solanum lycopersicum (Tomato).